The chain runs to 99 residues: Large ribosomal subunit protein uL23 (99 aa).

The protein belongs to the universal ribosomal protein uL23 family. In terms of assembly, part of the 50S ribosomal subunit. Contacts protein L29, and trigger factor when it is bound to the ribosome.

In terms of biological role, one of the early assembly proteins it binds 23S rRNA. One of the proteins that surrounds the polypeptide exit tunnel on the outside of the ribosome. Forms the main docking site for trigger factor binding to the ribosome. The protein is Large ribosomal subunit protein uL23 of Lachnoclostridium phytofermentans (strain ATCC 700394 / DSM 18823 / ISDg) (Clostridium phytofermentans).